The following is a 282-amino-acid chain: MSALILDGKSVTKKSEEDLRSRVARLKELSNGAVPILATILVGNDPSSATYVKMKSNACTRVGMDSLKVEMSEETTTEELLAEIAKLNANPNIHGILLQHPVPPQINERQCFDSIDLSKDVDGVTCWGFGRMAMNETSYGSATPKGIIRILEAYDIQLEGKHAVVVGRSPILGKPMAMMLLNKNCTVTICHSKTVGLDKIIKTADIVVGAVGKPEFIKADWIKDDAVVIDAGYHEGGIGDIELQPLMSRVKAYTPVPGGVGPMTINTLIYQTVEACELKLAQ.

NADP(+) is bound by residues 167–169 (GRS) and Ser-192.

It belongs to the tetrahydrofolate dehydrogenase/cyclohydrolase family. As to quaternary structure, homodimer.

It carries out the reaction (6R)-5,10-methylene-5,6,7,8-tetrahydrofolate + NADP(+) = (6R)-5,10-methenyltetrahydrofolate + NADPH. The catalysed reaction is (6R)-5,10-methenyltetrahydrofolate + H2O = (6R)-10-formyltetrahydrofolate + H(+). It functions in the pathway one-carbon metabolism; tetrahydrofolate interconversion. In terms of biological role, catalyzes the oxidation of 5,10-methylenetetrahydrofolate to 5,10-methenyltetrahydrofolate and then the hydrolysis of 5,10-methenyltetrahydrofolate to 10-formyltetrahydrofolate. The chain is Bifunctional protein FolD 1 from Colwellia psychrerythraea (strain 34H / ATCC BAA-681) (Vibrio psychroerythus).